Reading from the N-terminus, the 67-residue chain is Protein AaeX (67 aa).

2 consecutive transmembrane segments (helical) span residues 3 to 23 (VLPV…ELII) and 43 to 63 (LVWH…YLVS).

It belongs to the AaeX family.

It localises to the cell membrane. This chain is Protein AaeX, found in Pantoea vagans (strain C9-1) (Pantoea agglomerans (strain C9-1)).